A 237-amino-acid chain; its full sequence is Undecaprenyl-diphosphatase (237 aa).

7 helical membrane passes run 38–58, 65–85, 92–112, 126–146, 166–186, 191–211, and 217–237; these read QTAV…FDGI, WRII…GVLF, LFSS…ILMF, MSFL…FPGI, ALQY…ILGL, ITIL…YVLS, and GKIW…YLVG.

Belongs to the UppP family.

Its subcellular location is the cell inner membrane. It carries out the reaction di-trans,octa-cis-undecaprenyl diphosphate + H2O = di-trans,octa-cis-undecaprenyl phosphate + phosphate + H(+). In terms of biological role, catalyzes the dephosphorylation of undecaprenyl diphosphate (UPP). Confers resistance to bacitracin. The sequence is that of Undecaprenyl-diphosphatase from Thermotoga petrophila (strain ATCC BAA-488 / DSM 13995 / JCM 10881 / RKU-1).